Consider the following 184-residue polypeptide: Photosystem I assembly protein Ycf4 (184 aa).

2 consecutive transmembrane segments (helical) span residues 22 to 42 and 57 to 77; these read FCWA…GTSS and ILFF…LFIS.

This sequence belongs to the Ycf4 family.

The protein localises to the plastid. It is found in the chloroplast thylakoid membrane. Functionally, seems to be required for the assembly of the photosystem I complex. The chain is Photosystem I assembly protein Ycf4 from Liriodendron tulipifera (Tuliptree).